Reading from the N-terminus, the 366-residue chain is MVIMLKFIDLFCGCGGFSRGFVEEGFEPLVAIELNEDAAFSYALNFNGQIYEKIRPGEFKLKELKGYVGIYPFKFPFEEEDIKWLKRLGTLNEKTKKLSPVVINDDIREIHAIEIEKFIKNKKVDVIIGGPPCEGYTGANPKREKNPYDRLYKDETGRLVLEYIRIVGDLQPKIFVMENVPGIKEVRGAIIKEFREIGYEDVYFNTLRAEDYGNPSVRRRVFVSNIEINPEKTQPKTVIEAIGDLMYKGRDVPNHEFAALPARFRKRVHKLGWGDAFIYFKGANRRLGNYIRLHPLKLAETVMGKRFFIHPYEDRLLTPREQARLMSYPDYHLFAGGIRSCYNQIGESVPVALSRAIARVIKENLK.

The 362-residue stretch at 5-366 folds into the SAM-dependent MTase C5-type domain; it reads LKFIDLFCGC…IARVIKENLK (362 aa). Cysteine 133 is an active-site residue.

It belongs to the class I-like SAM-binding methyltransferase superfamily. C5-methyltransferase family.

The enzyme catalyses a 2'-deoxycytidine in DNA + S-adenosyl-L-methionine = a 5-methyl-2'-deoxycytidine in DNA + S-adenosyl-L-homocysteine + H(+). Functionally, a putative methylase that probably protects DNA from cleavage by the MjaORF1200P endonuclease. This is Putative type II methyltransferase M.MjaORF1200P from Methanocaldococcus jannaschii (strain ATCC 43067 / DSM 2661 / JAL-1 / JCM 10045 / NBRC 100440) (Methanococcus jannaschii).